Consider the following 1553-residue polypeptide: MASSQPTSSGPILDSPPSPNPQSQLNTETSSSQHRANPSEAPAQPGPGPARPSALTKRPSHREVAAYRMSRKLQRLRADSNQPHSPTMELPDRLKDNGKEEDNEEDVLQPQGGMFMNMNQSIFGLIAAAGSTVDFHDRFEGQSSEDEDDVPNHMAMTFAGPGIKGTARNRETAGTVKSLSQTVVFNKPPASATVDAGPSNIHRRRLPGHKLLQSVPSLSRLSSSHKSKKTKQHNATAMADNKIEEEEDPDPSSPLPPLSKDETESLGLAPPIEIVRAEGNGAPLMSRMLEARAEMEARPSFDLDRLSGEHRRDDAGVTGQLAKKLKDIFEFDTAEEVIEEYPCWLLQHVLLQGYMYITANHIAFYAHLPKKAHEIAKSGYLSKSGKRNPKYNRYWFRLKGDVLSYYQDPKDHYFPAGQIDLRYGISASVNDKEKEGNYFSVSTHHRTYHFKADSARSAKEWVKSLQRVIFRSHNDGDSVKISIPIRNILDIEEAQMVEFADTCKIRVIDNDETYAIDEYFFSFFSFGKKAIQVLKVLVEDSSPEDSGANDAPKGTGGDRAIGDNLGSPRTRTFSEGVKATLSPVSPIQIASPSSRASGDYFKSSFDGTRPFSRRSFDASPGTAGYAGSPPRRLHGDGRRSFSKPRHEPHASTDSYAQSFDDPSQASLSALVASGSEDQSASQILRGSDVFHSPIFRRSASATRATTEGEGVAAPPIVRQHTAGLVRLHGPHHAATTGQIGDHMAEAEGGPSTPMLQSIAMMGNYPLQRANAFMGYLDQQSRRMSNLLATESMGYVEKVSGMWKGGKKHYDHPAGRRTEREDVEDDPEERALSEARFQAHFALPETERLQAAYFGFIVRVLPLYGKIYISNRHFCFRSLLPGTRTKLILPLKDIETVDKEKGFRFGYSGLVVVIRGHEEIFFEFAKAENRDDCAITIIQSLDAARYLAESQEVEEAQAAEAERDALNQARNEEFPDHEIELPRQASGVSDAPTILFDDPKASFLNFKPSEPMRITCLTIGSRGDVQPYIALCKRLLEEGHRPKIVTHREFKDWIESHGIEFGPVEGDPSELMRICIENGTFTYAFLREANSKFRGWLDELLTSAWEACQGSDLLIESPSAMAGIHIAEALGIPYFRAFTMPWTRTRAYPHAFIMPGQKMGGAYNYITYVMFDNVFWKATAHQVNRWRNKYLGLPNTSLEKLQPNKVPFLYNFSPSVVPPPIDYSDWIRVTGYWFLDEGGDKWQPPKELTDFIAKARADEKKLVYIGFGSIIVSDPAKMTQEIIDAVLKADVRCILSKGWSDRSATVDGVEKPKVADPSFPPEILQIQSAPHDWLFQQVDAAAHHGGSGTTGASLRAGIPTIIRPFFGDQFFFAGRVEDLGVGIYLKKWGVQSFARALWEATHSSRMQMRAEVLGGQIRAENGVDTAIQAIYRDLDYARNLITLKRQKHQSRRNSVATPTPGAKPNAPEDDQGQAAEEDDIDADDEEEESWTFVGGNEDDLTGSMSMSRSDMLSQTVADLRGVKVGKAPALGSRVLSSPPTSPGAMRGAGGVKYV.

Polar residues-rich tracts occupy residues 1–10 (MASSQPTSSG) and 25–36 (LNTETSSSQHRA). 2 disordered regions span residues 1-106 (MASS…NEED) and 189-270 (PASA…GLAP). The segment covering 90 to 100 (LPDRLKDNGKE) has biased composition (basic and acidic residues). The segment covering 211–222 (LLQSVPSLSRLS) has biased composition (low complexity). Residues 223–232 (SSHKSKKTKQ) are compositionally biased toward basic residues. GRAM domains lie at 323–370 (KKLK…HLPK) and 464–495 (SLQRVIFRSHNDGDSVKISIPIRNILDIEEAQ). The PH domain maps to 374 to 470 (EIAKSGYLSK…WVKSLQRVIF (97 aa)). Disordered stretches follow at residues 542–569 (SPEDSGANDAPKGTGGDRAIGDNLGSPR), 611–662 (FSRR…FDDP), and 805–825 (GKKHYDHPAGRRTEREDVEDD). The segment covering 633-650 (LHGDGRRSFSKPRHEPHA) has biased composition (basic and acidic residues). Over residues 651 to 662 (STDSYAQSFDDP) the composition is skewed to polar residues. The segment covering 810 to 819 (DHPAGRRTER) has biased composition (basic and acidic residues). The GRAM 3 domain occupies 834 to 900 (ARFQAHFALP…KDIETVDKEK (67 aa)). Positions 1020, 1021, 1023, 1328, 1330, 1343, 1346, 1347, 1348, 1367, and 1368 each coordinate UDP-alpha-D-glucose. 2 disordered regions span residues 1446–1504 (KHQS…GSMS) and 1527–1553 (PALGSRVLSSPPTSPGAMRGAGGVKYV). Residues 1466-1488 (PEDDQGQAAEEDDIDADDEEEES) are compositionally biased toward acidic residues.

Belongs to the glycosyltransferase 28 family.

It is found in the cytoplasm. Its subcellular location is the preautophagosomal structure membrane. The catalysed reaction is a sterol + UDP-alpha-D-glucose = a sterol 3-beta-D-glucoside + UDP + H(+). The enzyme catalyses ergosterol + UDP-alpha-D-glucose = ergosteryl 3-beta-D-glucoside + UDP + H(+). Sterol glycosyltransferase responsible for the glycosylation of ergosterol to form ergosterol-glucoside. This Neurospora crassa (strain ATCC 24698 / 74-OR23-1A / CBS 708.71 / DSM 1257 / FGSC 987) protein is Sterol 3-beta-glucosyltransferase (apg-12).